The sequence spans 429 residues: Adenylosuccinate synthetase (429 aa).

GTP is bound by residues 12–18 (GDEGKGK) and 40–42 (GHT). D13 functions as the Proton acceptor in the catalytic mechanism. Mg(2+)-binding residues include D13 and G40. IMP contacts are provided by residues 13–16 (DEGK), 38–41 (NAGH), T128, R142, Q223, T238, and R302. H41 functions as the Proton donor in the catalytic mechanism. 298 to 304 (VNTGRPR) is a binding site for substrate. Residues R304, 330 to 332 (KLD), and 412 to 414 (GVG) each bind GTP.

Belongs to the adenylosuccinate synthetase family. Homodimer. Mg(2+) serves as cofactor.

It localises to the cytoplasm. The enzyme catalyses IMP + L-aspartate + GTP = N(6)-(1,2-dicarboxyethyl)-AMP + GDP + phosphate + 2 H(+). The protein operates within purine metabolism; AMP biosynthesis via de novo pathway; AMP from IMP: step 1/2. In terms of biological role, plays an important role in the de novo pathway of purine nucleotide biosynthesis. Catalyzes the first committed step in the biosynthesis of AMP from IMP. This is Adenylosuccinate synthetase from Kocuria rhizophila (strain ATCC 9341 / DSM 348 / NBRC 103217 / DC2201).